The primary structure comprises 176 residues: Mitochondrial inner membrane protein Mpv17 (176 aa).

A run of 4 helical transmembrane segments spans residues 18 to 38, 57 to 77, 94 to 114, and 131 to 151; these read VQVL…QQLV, LGCG…DHLI, GGFA…LNGM, and LITN…LVPL.

Belongs to the peroxisomal membrane protein PXMP2/4 family.

Its subcellular location is the mitochondrion inner membrane. In terms of biological role, non-selective channel that modulates the membrane potential under normal conditions and oxidative stress, and is involved in mitochondrial homeostasis. Involved in mitochondrial deoxynucleoside triphosphates (dNTP) pool homeostasis and mitochondrial DNA (mtDNA) maintenance. May be involved in the regulation of reactive oxygen species metabolism and the control of oxidative phosphorylation. In Rattus norvegicus (Rat), this protein is Mitochondrial inner membrane protein Mpv17.